We begin with the raw amino-acid sequence, 157 residues long: Small ribosomal subunit protein uS7 (157 aa).

The protein belongs to the universal ribosomal protein uS7 family. As to quaternary structure, part of the 30S ribosomal subunit. Contacts proteins S9 and S11.

Its function is as follows. One of the primary rRNA binding proteins, it binds directly to 16S rRNA where it nucleates assembly of the head domain of the 30S subunit. Is located at the subunit interface close to the decoding center, probably blocks exit of the E-site tRNA. The chain is Small ribosomal subunit protein uS7 from Leptospira borgpetersenii serovar Hardjo-bovis (strain JB197).